Reading from the N-terminus, the 1051-residue chain is Inactive tyrosine-protein kinase 7 (1051 aa).

Positions 1-22 (MAALRALLLLLAVGAQAAIRFA) are cleaved as a signal peptide. Ig-like C2-type domains follow at residues 23 to 105 (KEPY…ANAS), 115 to 204 (SVVL…DNFT), 213 to 298 (PQAV…KATL), 308 to 388 (PFSP…LSIT), 393 to 472 (PKWV…GSIE), 487 to 566 (PPPQ…ATVQ), and 573 to 661 (VTFK…AFLY). Residues 23-685 (KEPYSQDALH…SHTPYKMIQT (663 aa)) lie on the Extracellular side of the membrane. C40 and C88 are joined by a disulfide. N103 is a glycosylation site (N-linked (GlcNAc...) asparagine). An intrachain disulfide couples C137 to C187. 3 N-linked (GlcNAc...) asparagine glycosylation sites follow: N202, N255, and N264. Disulfide bonds link C234–C282, C326–C372, C414–C462, C505–C551, and C594–C645. N-linked (GlcNAc...) asparagine glycans are attached at residues N444, N548, and N627. Residues 686–706 (IGLSVGAAVAYIIIVLGLMFY) form a helical membrane-spanning segment. Over 707–1051 (CKKRRKAKRL…LGDSPADSKA (345 aa)) the chain is Cytoplasmic. The Protein kinase; inactive domain occupies 777–1048 (LQTITTLGRG…AAALGDSPAD (272 aa)).

It belongs to the protein kinase superfamily. Tyr protein kinase family. Insulin receptor subfamily. Expressed in bone marrow, spleen, bursa, thymus and brain. Weakly expressed in fibroblasts. Also expressed in embryonic liver.

The protein resides in the membrane. In terms of biological role, inactive tyrosine kinase involved in Wnt signaling. pathway. This Gallus gallus (Chicken) protein is Inactive tyrosine-protein kinase 7 (PTK7).